The chain runs to 331 residues: Isopenicillin N synthase (331 aa).

Isopenicillin N is bound by residues Arg87, Tyr91, Ser183, and Tyr189. Arg87, Tyr91, Ser183, Tyr189, His214, and Asp216 together coordinate N-[(5S)-5-amino-5-carboxypentanoyl]-L-cysteinyl-D-valine. Positions Lys176 to Leu288 constitute a Fe2OG dioxygenase domain. 3 residues coordinate Fe(2+): His214, Asp216, and His270. Residue Arg279 participates in 2-oxoglutarate binding. Ser281 provides a ligand contact to isopenicillin N. Ser281 provides a ligand contact to N-[(5S)-5-amino-5-carboxypentanoyl]-L-cysteinyl-D-valine.

The protein belongs to the iron/ascorbate-dependent oxidoreductase family. Monomer. Requires Fe(2+) as cofactor.

Its subcellular location is the cytoplasm. The protein resides in the cytosol. The enzyme catalyses N-[(5S)-5-amino-5-carboxypentanoyl]-L-cysteinyl-D-valine + O2 = isopenicillin N + 2 H2O. It participates in antibiotic biosynthesis; penicillin G biosynthesis; penicillin G from L-alpha-aminoadipate and L-cysteine and L-valine: step 2/3. Functionally, isopenicillin N synthase; part of the gene cluster that mediates the biosynthesis of penicillin, the world's most important antibiotic. IpnA catalyzes the cyclization of the tripeptide N-[(5S)-5-amino-5-carboxypentanoyl]-L-cysteinyl-D-valine (LLD-ACV or ACV) to form isopenicillin N (IPN) that contains the beta-lactam nucleus. The penicillin biosynthesis occurs via 3 enzymatic steps, the first corresponding to the production of the tripeptide N-[(5S)-5-amino-5-carboxypentanoyl]-L-cysteinyl-D-valine (LLD-ACV or ACV) by the NRPS acvA. The tripeptide ACV is then cyclized to isopenicillin N (IPN) by the isopenicillin N synthase ipnA that forms the beta-lactam nucleus. Finally, the alpha-aminoadipyl side chain is exchanged for phenylacetic acid by the isopenicillin N acyltransferase penDE to yield penicillin in the peroxisomal matrix. This Emericella nidulans (strain FGSC A4 / ATCC 38163 / CBS 112.46 / NRRL 194 / M139) (Aspergillus nidulans) protein is Isopenicillin N synthase.